The sequence spans 153 residues: UPF0251 protein CT0950 (153 aa).

Belongs to the UPF0251 family.

The protein is UPF0251 protein CT0950 of Chlorobaculum tepidum (strain ATCC 49652 / DSM 12025 / NBRC 103806 / TLS) (Chlorobium tepidum).